The primary structure comprises 220 residues: Ribosomal RNA small subunit methyltransferase J (220 aa).

S-adenosyl-L-methionine contacts are provided by residues 55–56, 71–72, and Asp-123; these read RD and ER.

It belongs to the methyltransferase superfamily. RsmJ family.

The protein resides in the cytoplasm. The enzyme catalyses guanosine(1516) in 16S rRNA + S-adenosyl-L-methionine = N(2)-methylguanosine(1516) in 16S rRNA + S-adenosyl-L-homocysteine + H(+). Its function is as follows. Specifically methylates the guanosine in position 1516 of 16S rRNA. This Rhodopseudomonas palustris (strain BisB5) protein is Ribosomal RNA small subunit methyltransferase J.